The chain runs to 254 residues: tRNA (guanine-N(7)-)-methyltransferase (254 aa).

Residues 1–11 (MSISDNSREEL) are compositionally biased toward basic and acidic residues. Residues 1 to 25 (MSISDNSREELGELPAGRPLQSEFN) form a disordered region. Residues Glu83, Glu108, Asp135, and Asp158 each contribute to the S-adenosyl-L-methionine site. Asp158 is an active-site residue. Lys162 contacts substrate. The interaction with RNA stretch occupies residues 164–169 (RHNKRR). Substrate-binding positions include Asp194 and 232 to 235 (TKFE).

This sequence belongs to the class I-like SAM-binding methyltransferase superfamily. TrmB family.

The catalysed reaction is guanosine(46) in tRNA + S-adenosyl-L-methionine = N(7)-methylguanosine(46) in tRNA + S-adenosyl-L-homocysteine. Its pathway is tRNA modification; N(7)-methylguanine-tRNA biosynthesis. Functionally, catalyzes the formation of N(7)-methylguanine at position 46 (m7G46) in tRNA. The protein is tRNA (guanine-N(7)-)-methyltransferase of Corynebacterium efficiens (strain DSM 44549 / YS-314 / AJ 12310 / JCM 11189 / NBRC 100395).